We begin with the raw amino-acid sequence, 1138 residues long: Pesticidal crystal protein Cry7Aa (1138 aa).

This sequence belongs to the delta endotoxin family.

Promotes colloidosmotic lysis by binding to the midgut epithelial cells of Coleoptera. This protein is not toxic in its natural form. It is highly toxic to Colorado potato beetle larvae after an in vitro solubilization and trypsin activation step. This chain is Pesticidal crystal protein Cry7Aa (cry7Aa), found in Bacillus thuringiensis.